Here is a 390-residue protein sequence, read N- to C-terminus: GDSL esterase/lipase At1g28640 (390 aa).

Positions 1–26 (MASSLEKLISSFLLVLYSTTIIVASS) are cleaved as a signal peptide. The Nucleophile role is filled by Ser-42. Residues Asn-105, Asn-138, and Asn-321 are each glycosylated (N-linked (GlcNAc...) asparagine). Catalysis depends on residues Asp-346 and His-349. A glycan (N-linked (GlcNAc...) asparagine) is linked at Asn-364.

It belongs to the 'GDSL' lipolytic enzyme family.

The protein localises to the secreted. In Arabidopsis thaliana (Mouse-ear cress), this protein is GDSL esterase/lipase At1g28640.